The chain runs to 101 residues: Small ribosomal subunit protein uS10 (101 aa).

Belongs to the universal ribosomal protein uS10 family. In terms of assembly, part of the 30S ribosomal subunit.

Functionally, involved in the binding of tRNA to the ribosomes. In Corynebacterium jeikeium (strain K411), this protein is Small ribosomal subunit protein uS10.